The following is a 354-amino-acid chain: Thiamine thiazole synthase 2, chloroplastic (354 aa).

A chloroplast-targeting transit peptide spans 1-44 (MATTAASSLLKSSFAGSRLPSATRTTTPSSVAVATPRAGGGPIR). The disordered stretch occupies residues 17–49 (SRLPSATRTTTPSSVAVATPRAGGGPIRASISS). The segment covering 20 to 32 (PSATRTTTPSSVA) has biased composition (polar residues). Residues alanine 97, 117-118 (EQ), glycine 125, and valine 190 each bind substrate. Cysteine 219 is subject to 2,3-didehydroalanine (Cys). Residues aspartate 221, histidine 236, methionine 288, and 298 to 300 (RMG) contribute to the substrate site.

The protein belongs to the THI4 family. As to quaternary structure, homooctamer. The cofactor is Fe cation. Post-translationally, during the catalytic reaction, a sulfide is transferred from Cys-219 to a reaction intermediate, generating a dehydroalanine residue. Highest expression in developing embryos and green leaves and a very low level expression seen in endosperm, roots, etiolated shoots and immature ears.

It localises to the plastid. The protein resides in the chloroplast. The enzyme catalyses [ADP-thiazole synthase]-L-cysteine + glycine + NAD(+) = [ADP-thiazole synthase]-dehydroalanine + ADP-5-ethyl-4-methylthiazole-2-carboxylate + nicotinamide + 3 H2O + 2 H(+). Involved in biosynthesis of the thiamine precursor thiazole. Catalyzes the conversion of NAD and glycine to adenosine diphosphate 5-(2-hydroxyethyl)-4-methylthiazole-2-carboxylic acid (ADT), an adenylated thiazole intermediate. The reaction includes an iron-dependent sulfide transfer from a conserved cysteine residue of the protein to a thiazole intermediate. The enzyme can only undergo a single turnover, which suggests it is a suicide enzyme. May have additional roles in adaptation to various stress conditions and in DNA damage tolerance. This chain is Thiamine thiazole synthase 2, chloroplastic, found in Zea mays (Maize).